The chain runs to 135 residues: Probable disulfide formation protein (135 aa).

Residues 7–26 (SYCLYFAWLVSCIGTLMSVY) traverse the membrane as a helical segment. A disulfide bridge links Cys36 with Cys39. The next 2 helical transmembrane spans lie at 41-60 (YQRI…AYLD) and 67-84 (YALP…YQVC). A disulfide bridge connects residues Cys96 and Cys101. The chain crosses the membrane as a helical span at residues 109–131 (GFITMPMASALAFFAIANLLIFA).

The protein belongs to the DsbB family. BdbC subfamily.

It is found in the cell inner membrane. In terms of biological role, required for disulfide bond formation in some proteins. In Chlamydia muridarum (strain MoPn / Nigg), this protein is Probable disulfide formation protein.